The following is a 395-amino-acid chain: Ribosomal RNA large subunit methyltransferase G (395 aa).

The protein belongs to the methyltransferase superfamily. RlmG family.

It localises to the cytoplasm. It carries out the reaction guanosine(1835) in 23S rRNA + S-adenosyl-L-methionine = N(2)-methylguanosine(1835) in 23S rRNA + S-adenosyl-L-homocysteine + H(+). Functionally, specifically methylates the guanine in position 1835 (m2G1835) of 23S rRNA. This chain is Ribosomal RNA large subunit methyltransferase G, found in Yersinia pestis (strain Pestoides F).